The following is a 377-amino-acid chain: Glutamate 5-kinase (377 aa).

K18 lines the ATP pocket. Substrate-binding residues include S55, D142, and N154. Residues 174–175 (SD) and 216–222 (TGGMKSK) contribute to the ATP site. Residues 281–359 (QGEVVVDAGA…REIEALLGYK (79 aa)) enclose the PUA domain.

It belongs to the glutamate 5-kinase family.

The protein resides in the cytoplasm. The enzyme catalyses L-glutamate + ATP = L-glutamyl 5-phosphate + ADP. It functions in the pathway amino-acid biosynthesis; L-proline biosynthesis; L-glutamate 5-semialdehyde from L-glutamate: step 1/2. In terms of biological role, catalyzes the transfer of a phosphate group to glutamate to form L-glutamate 5-phosphate. The sequence is that of Glutamate 5-kinase from Meiothermus ruber.